A 304-amino-acid chain; its full sequence is GTPase Era (304 aa).

An Era-type G domain is found at 11–179 (YCGFIAIVGR…QKIVRKSLRE (169 aa)). The tract at residues 19 to 26 (GRPNVGKS) is G1. 19–26 (GRPNVGKS) is a GTP binding site. The segment at 45–49 (QTTRH) is G2. Residues 66–69 (DTPG) are G3. Residues 66–70 (DTPGL) and 128–131 (NKVD) contribute to the GTP site. A G4 region spans residues 128–131 (NKVD). The interval 158–160 (ISA) is G5. The KH type-2 domain occupies 210-287 (TGEELPYSVT…HLELWVKVKA (78 aa)).

Belongs to the TRAFAC class TrmE-Era-EngA-EngB-Septin-like GTPase superfamily. Era GTPase family. As to quaternary structure, monomer.

It localises to the cytoplasm. It is found in the cell inner membrane. Functionally, an essential GTPase that binds both GDP and GTP, with rapid nucleotide exchange. Plays a role in 16S rRNA processing and 30S ribosomal subunit biogenesis and possibly also in cell cycle regulation and energy metabolism. The protein is GTPase Era of Haemophilus ducreyi (strain 35000HP / ATCC 700724).